Here is a 269-residue protein sequence, read N- to C-terminus: Regulatory protein RecX (269 aa).

The protein belongs to the RecX family.

It localises to the cytoplasm. Modulates RecA activity. This is Regulatory protein RecX from Lactococcus lactis subsp. cremoris (strain SK11).